Reading from the N-terminus, the 338-residue chain is Mitoferrin-1 (338 aa).

A disordered region spans residues 1 to 37; it reads MELRRGGVGSQAAGRRMDGDCRDGGCGSKDAGSEDYE. Solcar repeat units lie at residues 43 to 131, 141 to 225, and 232 to 326; these read ASVS…MKRT, NSHL…LQEQ, and YNPQ…FKYF. The next 6 membrane-spanning stretches (helical) occupy residues 45–64, 106–125, 143–162, 200–219, 234–253, and 301–320; these read VSTH…SIMY, GLNV…FACY, HLAN…AVMN, SYTT…FITY, PQSH…AATT, and GIQA…WSVY.

Belongs to the mitochondrial carrier (TC 2.A.29) family. As to quaternary structure, interacts with ACB10; this interaction stabilizes SLC25A37 and enhances the function of SLC25A37 to import mitochondrial iron during erythroid differentiation.

The protein localises to the mitochondrion inner membrane. The catalysed reaction is Fe(2+)(in) = Fe(2+)(out). In terms of biological role, mitochondrial iron transporter that specifically mediates iron uptake in developing erythroid cells, thereby playing an essential role in heme biosynthesis. This is Mitoferrin-1 (Slc25a37) from Rattus norvegicus (Rat).